The sequence spans 275 residues: Translation initiation factor 2 subunit alpha (275 aa).

The region spanning 12–83 (GELVVATVKR…KKGHIDLSLR (72 aa)) is the S1 motif domain.

This sequence belongs to the eIF-2-alpha family. Heterotrimer composed of an alpha, a beta and a gamma chain.

EIF-2 functions in the early steps of protein synthesis by forming a ternary complex with GTP and initiator tRNA. The polypeptide is Translation initiation factor 2 subunit alpha (Pyrococcus furiosus (strain ATCC 43587 / DSM 3638 / JCM 8422 / Vc1)).